Consider the following 280-residue polypeptide: Succinate dehydrogenase [ubiquinone] iron-sulfur subunit 2, mitochondrial (280 aa).

The N-terminal 28 residues, 1–28 (MAFGLIGRVVGTKSSRLSTAARLIPARW), are a transit peptide targeting the mitochondrion. Residues 51–140 (FQIYRWNPDN…ETTITPLPHM (90 aa)) enclose the 2Fe-2S ferredoxin-type domain. 3 residues coordinate [2Fe-2S] cluster: C101, C106, and C121. Residues 183-213 (DRAKLDGMYECILCACCSTSCPSYWWNPESY) form the 4Fe-4S ferredoxin-type domain. The [4Fe-4S] cluster site is built by C193, C196, and C199. C203 is a binding site for [3Fe-4S] cluster. W208 is an a ubiquinone binding site. [3Fe-4S] cluster-binding residues include C250 and C256. [4Fe-4S] cluster is bound at residue C260.

It belongs to the succinate dehydrogenase/fumarate reductase iron-sulfur protein family. Component of complex II composed of eight subunits in plants: four classical SDH subunits SDH1, SDH2, SDH3 and SDH4 (a flavoprotein (FP), an iron-sulfur protein (IP), and a cytochrome b composed of a large and a small subunit.), as well as four subunits unknown in mitochondria from bacteria and heterotrophic eukaryotes. It depends on [2Fe-2S] cluster as a cofactor. Requires [3Fe-4S] cluster as cofactor. [4Fe-4S] cluster is required as a cofactor. As to expression, ubiquitous. Preferentially expressed in flowers, inflorescences and root tips.

It is found in the mitochondrion inner membrane. The enzyme catalyses a quinone + succinate = fumarate + a quinol. It participates in carbohydrate metabolism; tricarboxylic acid cycle; fumarate from succinate (eukaryal route): step 1/1. Functionally, iron-sulfur protein (IP) subunit of succinate dehydrogenase (SDH) that is involved in complex II of the mitochondrial electron transport chain and is responsible for transferring electrons from succinate to ubiquinone (coenzyme Q). The protein is Succinate dehydrogenase [ubiquinone] iron-sulfur subunit 2, mitochondrial (SDH2-2) of Arabidopsis thaliana (Mouse-ear cress).